Consider the following 623-residue polypeptide: Glutathione import ATP-binding protein GsiA (623 aa).

2 consecutive ABC transporter domains span residues Val15–Leu269 and Leu325–Met564. ATP-binding positions include Gly49–Ser56 and Gly357–Ser364.

The protein belongs to the ABC transporter superfamily. Glutathione importer (TC 3.A.1.5.11) family. In terms of assembly, the complex is composed of two ATP-binding proteins (GsiA), two transmembrane proteins (GsiC and GsiD) and a solute-binding protein (GsiB).

Its subcellular location is the cell inner membrane. The catalysed reaction is glutathione(out) + ATP + H2O = glutathione(in) + ADP + phosphate + H(+). Its function is as follows. Part of the ABC transporter complex GsiABCD involved in glutathione import. Responsible for energy coupling to the transport system. The protein is Glutathione import ATP-binding protein GsiA of Salmonella paratyphi A (strain ATCC 9150 / SARB42).